We begin with the raw amino-acid sequence, 371 residues long: o-succinylbenzoate synthase (371 aa).

The active-site Proton donor is the Lys164. Residues Asp189, Glu214, and Asp239 each contribute to the Mg(2+) site. The active-site Proton acceptor is the Lys263.

The protein belongs to the mandelate racemase/muconate lactonizing enzyme family. MenC type 2 subfamily. The cofactor is a divalent metal cation.

It carries out the reaction (1R,6R)-6-hydroxy-2-succinyl-cyclohexa-2,4-diene-1-carboxylate = 2-succinylbenzoate + H2O. Its pathway is quinol/quinone metabolism; 1,4-dihydroxy-2-naphthoate biosynthesis; 1,4-dihydroxy-2-naphthoate from chorismate: step 4/7. It functions in the pathway quinol/quinone metabolism; menaquinone biosynthesis. Functionally, converts 2-succinyl-6-hydroxy-2,4-cyclohexadiene-1-carboxylate (SHCHC) to 2-succinylbenzoate (OSB). Does not show detectable N-acylamino acid racemase (NAAAR) activity with N-acetyl-S-methionine as substrate. The protein is o-succinylbenzoate synthase of Bacillus subtilis (strain 168).